The following is a 176-amino-acid chain: Small ribosomal subunit protein uS5 (176 aa).

Residues 11–74 (LSEVLVDVNR…QAAKKRMMKV (64 aa)) enclose the S5 DRBM domain.

Belongs to the universal ribosomal protein uS5 family. Part of the 30S ribosomal subunit. Contacts proteins S4 and S8.

Its function is as follows. With S4 and S12 plays an important role in translational accuracy. Functionally, located at the back of the 30S subunit body where it stabilizes the conformation of the head with respect to the body. The sequence is that of Small ribosomal subunit protein uS5 from Rickettsia akari (strain Hartford).